The sequence spans 801 residues: Protocadherin beta-8 (801 aa).

A signal peptide spans 1–29 (MEASGKLICRQRQVLFSFLLLGLSLAGAA). Residues 30-691 (EPRSYSVVEE…GQADSLTVYL (662 aa)) are Extracellular-facing. 5 Cadherin domains span residues 36–134 (VVEE…SPVF), 139–243 (MLVK…APEF), 248–348 (YRVQ…APEV), 353–452 (FTSP…APAF), and 457–562 (YTLF…SPFV). A disulfide bond links C97 and C103. N-linked (GlcNAc...) asparagine glycans are attached at residues N419 and N437. N-linked (GlcNAc...) asparagine glycosylation is present at N568. The Cadherin 6 domain maps to 569–672 (GSAPCTELVP…LVDGFSQPYL (104 aa)). Residues 692-710 (VVALASVSSLFLFSVLLFV) traverse the membrane as a helical segment. The Cytoplasmic segment spans residues 711-801 (AVLLCRRSRA…NGFGFSLQLK (91 aa)).

Forms homodimers in trans (molecules expressed by two different cells). Forms promiscuous heterodimers in cis (at the plasma membrane of the same cell) with other protocadherins.

Its subcellular location is the cell membrane. In terms of biological role, calcium-dependent cell-adhesion protein involved in cells self-recognition and non-self discrimination. Thereby, it is involved in the establishment and maintenance of specific neuronal connections in the brain. This is Protocadherin beta-8 from Homo sapiens (Human).